Here is a 530-residue protein sequence, read N- to C-terminus: UDP-glucuronosyltransferase 2A3 (530 aa).

The N-terminal stretch at 1 to 23 (MAPGKLASAVLLLLLCCAGSGFC) is a signal peptide. Over 24-494 (GKVLVWPCEM…SWFQYHSLDV (471 aa)) the chain is Extracellular. The N-linked (GlcNAc...) asparagine glycan is linked to Asn316. A helical transmembrane segment spans residues 495–515 (IGFLLACVASAILLVTKCCLF). The Cytoplasmic portion of the chain corresponds to 516–530 (SFQNFIKIGKRIKKE).

It belongs to the UDP-glycosyltransferase family. In terms of tissue distribution, specifically expressed in liver and small intestine.

The protein resides in the membrane. The enzyme catalyses glucuronate acceptor + UDP-alpha-D-glucuronate = acceptor beta-D-glucuronoside + UDP + H(+). In terms of biological role, UDP-glucuronosyltransferases catalyze phase II biotransformation reactions in which lipophilic substrates are conjugated with glucuronic acid to increase water solubility and enhance excretion. They are of major importance in the conjugation and subsequent elimination of potentially toxic xenobiotics and endogenous compounds. This is UDP-glucuronosyltransferase 2A3 (UGT2A3) from Cavia porcellus (Guinea pig).